We begin with the raw amino-acid sequence, 251 residues long: Large ribosomal subunit protein uL3 (251 aa).

At Q151 the chain carries N5-methylglutamine. Residues 219–251 (PGAFRRNGEEAAAAPAAEAPAETPAEEAGQEGA) form a disordered region. Over residues 228 to 241 (EAAAAPAAEAPAET) the composition is skewed to low complexity. A compositionally biased stretch (acidic residues) spans 242–251 (PAEEAGQEGA).

It belongs to the universal ribosomal protein uL3 family. In terms of assembly, part of the 50S ribosomal subunit. Forms a cluster with proteins L14 and L19. Post-translationally, methylated by PrmB.

In terms of biological role, one of the primary rRNA binding proteins, it binds directly near the 3'-end of the 23S rRNA, where it nucleates assembly of the 50S subunit. This is Large ribosomal subunit protein uL3 from Parvibaculum lavamentivorans (strain DS-1 / DSM 13023 / NCIMB 13966).